Consider the following 251-residue polypeptide: Large ribosomal subunit protein uL4 (251 aa).

Belongs to the universal ribosomal protein uL4 family. As to quaternary structure, part of the 50S ribosomal subunit.

One of the primary rRNA binding proteins, this protein initially binds near the 5'-end of the 23S rRNA. It is important during the early stages of 50S assembly. It makes multiple contacts with different domains of the 23S rRNA in the assembled 50S subunit and ribosome. Functionally, forms part of the polypeptide exit tunnel. The protein is Large ribosomal subunit protein uL4 of Methanothrix thermoacetophila (strain DSM 6194 / JCM 14653 / NBRC 101360 / PT) (Methanosaeta thermophila).